The chain runs to 365 residues: MEVCLPNGHQIVDWINNAFEGRVSIYSAQQGWDKTISAQPDMMVCGGAVVCMHCLGVVGSLQRKLKHLPHHKCNQQLRQQDYVDVQFADRVTAHWKRGMLSFVSQMHAIMNDVTPEELERVRTDGGSLAELNWLQVDPGSMFRSIHSSWTDPLQVVEDLDTQLDRYWTALNLMIDSSDLVPNFMMRDPSHAFNGVKLEGEARQTQFSRTFDSRSNLEWGVMIYDYSELERDPLKGRAYRKEVVTPARDFGHFGLSHYSRATTPILGKMPAVFSGMLTGNCKMYPFIKGTAKLRTVKKLVDAVNHTWGSEKIRYALGPGGMTGWYNRTMQQAPIVLTPAALTMFPDMTKFGDLQYPIMIGDPAVLG.

The CCHC-type zinc-finger motif lies at 51–73 (CMHCLGVVGSLQRKLKHLPHHKC).

It belongs to the orthoreovirus sigma-3 protein family. Heterohexamer of three sigma-3 and three Mu-1 proteins. The RNA-binding form is probably a homodimer. In terms of processing, cleaved during virus the endosomal proteolytic disassembly of the outer capsid.

The protein localises to the virion. It is found in the host cytoplasm. Its subcellular location is the host nucleus. In terms of biological role, stimulates translation by blocking the activation of the dsRNA-dependent protein kinase EIF2AK2/PKR, thereby inhibiting the host interferon response. Sigma3 prevents the activation of EIF2AK2 by competing with the kinase for dsRNA-binding. Functionally, the viral outer shell polypeptides, of which sigma-3 is one, impose structural constraints that prevent elongation of nascent transcripts by the RNA-dependent RNA polymerase lambda-3. The sequence is that of Outer capsid protein sigma-3 (S4) from Mammalia (T2J).